The following is a 235-amino-acid chain: Serine protease SplA (235 aa).

The first 35 residues, 1–35 (MNKNVMVKGLTALDILTSLGCAENISDQPHSIAKA), serve as a signal peptide directing secretion. Catalysis depends on charge relay system residues H74, D113, and S189.

Belongs to the peptidase S1B family.

It localises to the secreted. This chain is Serine protease SplA (splA), found in Staphylococcus aureus.